The chain runs to 173 residues: Pathogenesis-related protein 1A/1B (173 aa).

The first 20 residues, 1–20, serve as a signal peptide directing secretion; it reads MSTSAVLFLLLAVFAAGASA.

Belongs to the thaumatin family.

The chain is Pathogenesis-related protein 1A/1B from Hordeum vulgare (Barley).